A 603-amino-acid chain; its full sequence is Proline--tRNA ligase (603 aa).

Belongs to the class-II aminoacyl-tRNA synthetase family. ProS type 1 subfamily. Homodimer.

It is found in the cytoplasm. The catalysed reaction is tRNA(Pro) + L-proline + ATP = L-prolyl-tRNA(Pro) + AMP + diphosphate. Catalyzes the attachment of proline to tRNA(Pro) in a two-step reaction: proline is first activated by ATP to form Pro-AMP and then transferred to the acceptor end of tRNA(Pro). As ProRS can inadvertently accommodate and process non-cognate amino acids such as alanine and cysteine, to avoid such errors it has two additional distinct editing activities against alanine. One activity is designated as 'pretransfer' editing and involves the tRNA(Pro)-independent hydrolysis of activated Ala-AMP. The other activity is designated 'posttransfer' editing and involves deacylation of mischarged Ala-tRNA(Pro). The misacylated Cys-tRNA(Pro) is not edited by ProRS. In Prochlorococcus marinus (strain SARG / CCMP1375 / SS120), this protein is Proline--tRNA ligase.